The following is a 197-amino-acid chain: Rac-like GTP-binding protein ARAC1 (197 aa).

13-20 (GDGAVGKT) contributes to the GTP binding site. Positions 35–43 (YVPTVFDNF) match the Effector region motif. GTP contacts are provided by residues 60–64 (DTAGQ) and 118–121 (TKLD). Cysteine methyl ester is present on C194. C194 is lipidated: S-geranylgeranyl cysteine. Residues 195–197 (SIL) constitute a propeptide, removed in mature form.

The protein belongs to the small GTPase superfamily. Rho family. In terms of assembly, interacts with SPK1. Ubiquitous.

It localises to the cytoplasm. The protein resides in the membrane. Inactive GDP-bound Rho GTPases reside in the cytosol, are found in a complex with Rho GDP-dissociation inhibitors (Rho GDIs), and are released from the GDI protein in order to translocate to membranes upon activation. The chain is Rac-like GTP-binding protein ARAC1 (ARAC1) from Arabidopsis thaliana (Mouse-ear cress).